A 55-amino-acid polypeptide reads, in one-letter code: Large ribosomal subunit protein uL15 (55 aa).

The protein belongs to the universal ribosomal protein uL15 family. Part of the 50S ribosomal subunit.

Binds to the 23S rRNA. The protein is Large ribosomal subunit protein uL15 (rplO) of Lactococcus lactis subsp. cremoris (Streptococcus cremoris).